The following is a 365-amino-acid chain: Gibberellin 20 oxidase 1-B (365 aa).

One can recognise a Fe2OG dioxygenase domain in the interval 199-299 (GNDSIMRLNY…RKSLAFFLCP (101 aa)). 3 residues coordinate Fe cation: His224, Asp226, and His280. Arg290 is a catalytic residue.

It belongs to the iron/ascorbate-dependent oxidoreductase family. GA20OX subfamily. Requires Fe cation as cofactor. It depends on L-ascorbate as a cofactor. Not detected in nodes and the ear of the elongating stem.

It catalyses the reaction gibberellin A12 + 2 2-oxoglutarate + 3 O2 + H(+) = gibberellin A9 + 2 succinate + 3 CO2 + 2 H2O. The enzyme catalyses gibberellin A53 + 2 2-oxoglutarate + 3 O2 + H(+) = gibberellin A20 + 2 succinate + 3 CO2 + 2 H2O. In terms of biological role, key oxidase enzyme in the biosynthesis of gibberellin that catalyzes the conversion of GA12 and GA53 to GA9 and GA20 respectively, via a three-step oxidation at C-20 of the GA skeleton. This Triticum aestivum (Wheat) protein is Gibberellin 20 oxidase 1-B (GA20ox1B).